We begin with the raw amino-acid sequence, 104 residues long: Co-chaperonin GroES 2 (104 aa).

This sequence belongs to the GroES chaperonin family. As to quaternary structure, heptamer of 7 subunits arranged in a ring. Interacts with the chaperonin GroEL.

It localises to the cytoplasm. Together with the chaperonin GroEL, plays an essential role in assisting protein folding. The GroEL-GroES system forms a nano-cage that allows encapsulation of the non-native substrate proteins and provides a physical environment optimized to promote and accelerate protein folding. GroES binds to the apical surface of the GroEL ring, thereby capping the opening of the GroEL channel. This chain is Co-chaperonin GroES 2, found in Mesorhizobium japonicum (strain LMG 29417 / CECT 9101 / MAFF 303099) (Mesorhizobium loti (strain MAFF 303099)).